The chain runs to 269 residues: Activator of basal transcription 1 (269 aa).

Positions 1 to 40 (MVKAGELVEQQKAAMEEEANAEAAEDQEEPEDTACSSSSK) are disordered. Residues 5 to 29 (GELVEQQKAAMEEEANAEAAEDQEE) adopt a coiled-coil conformation. Positions 16 to 32 (EEEANAEAAEDQEEPED) are enriched in acidic residues. Residues 48–145 (GIVYLGHVPP…RKRSPFRYDL (98 aa)) enclose the RRM domain. Residues 164-194 (AFERQVRRQRLRAEVAQAKRETDFYLRNVEQ) adopt a coiled-coil conformation. A disordered region spans residues 220–244 (EQEFRARKAARPGGRERARLANVED).

This sequence belongs to the ESF2/ABP1 family. In terms of assembly, interacts with ESF1/ABTAP. Interacts with IGHMBP2. Ubiquitously expressed.

The protein localises to the nucleus. It is found in the nucleolus. Functionally, could be a novel TATA-binding protein (TBP) which can function as a basal transcription activator. Can act as a regulator of basal transcription for class II genes. The polypeptide is Activator of basal transcription 1 (Abt1) (Mus musculus (Mouse)).